A 369-amino-acid polypeptide reads, in one-letter code: MSEPTKAPAASAGSRAATKKELPEHFKAYKHVWVFIEQERGQVHPVSWELMGAGRKLADKLKVELAAIVLGPDDEATQHAAAEAFSYGADLTYVVADPLLTDYRNEAYTKALTDVVNTYKPEILLLGATTLGRDLAGSVATTLLTGLTADCTELDVDADGSLAATRPTFGGSLLCTIYTLNYRPQMATVRPRVMPMPEREEKPIGRIITHPLGMVEDDIVTKILSFLPDRDSAKSNLAYADVVVAGGLGLGSPENFQLVRQLAGVLGAEYGCSRPLVQKGWVTSDRQIGQTGKTIRPKLYIAAGISGAIQHRVGVEGADMIVAINTDKNAPIFDFAHVGIVTDAIRLLPALTEAFRARLSPHSRDRIAS.

299 to 327 is a binding site for FAD; that stretch reads LYIAAGISGAIQHRVGVEGADMIVAINTD.

The protein belongs to the ETF alpha-subunit/FixB family. As to quaternary structure, fixA and FixB form a heterodimer.

In terms of biological role, may play a role in a redox process involved in nitrogen fixation. The sequence is that of Protein FixB (fixB) from Azorhizobium caulinodans (strain ATCC 43989 / DSM 5975 / JCM 20966 / LMG 6465 / NBRC 14845 / NCIMB 13405 / ORS 571).